The chain runs to 480 residues: CASP8 and FADD-like apoptosis regulator (480 aa).

DED domains follow at residues 1–73 (MSAE…RILK) and 92–170 (DYRV…KIQK). The segment at 1–195 (MSAEVIHQVE…LQAAIQKSLK (195 aa)) is interaction with CASP8. The tract at residues 1–227 (MSAEVIHQVE…GAQQEPVKKS (227 aa)) is interaction with FADD. Residues 1 to 305 (MSAEVIHQVE…FACMPEHRDY (305 aa)) form an interaction with CASP8 propeptide region. The tract at residues 1–435 (MSAEVIHQVE…CLSQKLRQER (435 aa)) is not proteolytically processed and involved in apoptosis inhibition. Residues 192–435 (KSLKDPSNNF…CLSQKLRQER (244 aa)) form an interaction with CASP3 region. Positions 192 to 480 (KSLKDPSNNF…LRKKLILSYT (289 aa)) are interaction with TRAF1 and TRAF2. The tract at residues 217 to 480 (LGAQQEPVKK…LRKKLILSYT (264 aa)) is interaction with CASP8 subunits p18 and p10. Residues 263–358 (ETELLRDTFT…AGKPKMFFIQ (96 aa)) form a caspase region. The tract at residues 370-480 (SSLLEVDGPA…LRKKLILSYT (111 aa)) is interaction with CASP8.

This sequence belongs to the peptidase C14A family. In terms of assembly, TNFRSF6 stimulation triggers recruitment to the death-inducing signaling complex (DISC) formed by TNFRSF6, FADD and CASP8. A proteolytic fragment (p43) stays associated with the DISC. Also interacts with FADD, CASP8, CASP3, TRAF1, TRAF2 and Bcl-X(L) (in vitro). Interacts with RIPK1. (Microbial infection) Interacts with HBV protein X. In terms of processing, proteolytically processed by CASP8 generating subunit p43 and p12. In terms of tissue distribution, widely expressed. Higher expression in skeletal muscle, pancreas, heart, kidney, placenta, and peripheral blood leukocytes. Also detected in diverse cell lines. Isoform 8 is predominantly expressed in testis and skeletal muscle.

In terms of biological role, apoptosis regulator protein which may function as a crucial link between cell survival and cell death pathways in mammalian cells. Acts as an inhibitor of TNFRSF6 mediated apoptosis. A proteolytic fragment (p43) is likely retained in the death-inducing signaling complex (DISC) thereby blocking further recruitment and processing of caspase-8 at the complex. Full length and shorter isoforms have been shown either to induce apoptosis or to reduce TNFRSF-triggered apoptosis. Lacks enzymatic (caspase) activity. The protein is CASP8 and FADD-like apoptosis regulator (CFLAR) of Homo sapiens (Human).